Reading from the N-terminus, the 309-residue chain is Ornithine carbamoyltransferase (309 aa).

Carbamoyl phosphate-binding positions include 57 to 60, Gln84, Arg108, and 135 to 138; these read STRT and HPCQ. L-ornithine contacts are provided by residues Asn166, Asp224, and 228 to 229; that span reads SM. Carbamoyl phosphate-binding positions include 264–265 and Arg292; that span reads CL.

This sequence belongs to the aspartate/ornithine carbamoyltransferase superfamily. OTCase family.

Its subcellular location is the cytoplasm. The catalysed reaction is carbamoyl phosphate + L-ornithine = L-citrulline + phosphate + H(+). It functions in the pathway amino-acid biosynthesis; L-arginine biosynthesis; L-arginine from L-ornithine and carbamoyl phosphate: step 1/3. In terms of biological role, reversibly catalyzes the transfer of the carbamoyl group from carbamoyl phosphate (CP) to the N(epsilon) atom of ornithine (ORN) to produce L-citrulline. The protein is Ornithine carbamoyltransferase of Paracidovorax citrulli (strain AAC00-1) (Acidovorax citrulli).